An 85-amino-acid polypeptide reads, in one-letter code: U4-theraphotoxin-Hhn1u (85 aa).

The N-terminal stretch at 1–22 (MKMTLIAILTCAAVLVLHTTAA) is a signal peptide. Positions 23 to 48 (EELEAESQLMEVGMPDTELEAVDEER) are excised as a propeptide. 3 cysteine pairs are disulfide-bonded: cysteine 52–cysteine 66, cysteine 56–cysteine 77, and cysteine 71–cysteine 82.

It belongs to the neurotoxin 12 (Hwtx-2) family. 02 (Hwtx-2) subfamily. In terms of tissue distribution, expressed by the venom gland.

It localises to the secreted. Functionally, postsynaptic neurotoxin. In Cyriopagopus hainanus (Chinese bird spider), this protein is U4-theraphotoxin-Hhn1u.